A 339-amino-acid chain; its full sequence is Basic membrane protein A (339 aa).

The signal sequence occupies residues 1 to 17 (MNKILLLILLESIVFLS). A lipid anchor (N-palmitoyl cysteine) is attached at Cys-18. Cys-18 carries the S-diacylglycerol cysteine lipid modification.

The protein belongs to the BMP lipoprotein family. In terms of assembly, monomer.

The protein resides in the cell inner membrane. In terms of biological role, immunogenic protein. May be part of an ABC-type nucleoside uptake system involved in the purine salvage pathway. This chain is Basic membrane protein A (bmpA), found in Borreliella burgdorferi (strain ATCC 35210 / DSM 4680 / CIP 102532 / B31) (Borrelia burgdorferi).